The chain runs to 259 residues: Triosephosphate isomerase (259 aa).

10–12 (NWK) is a substrate binding site. The active-site Electrophile is His102. The Proton acceptor role is filled by Glu174. Residues Gly180, Ser220, and 241-242 (GG) contribute to the substrate site.

The protein belongs to the triosephosphate isomerase family. In terms of assembly, homodimer.

Its subcellular location is the cytoplasm. The enzyme catalyses D-glyceraldehyde 3-phosphate = dihydroxyacetone phosphate. It functions in the pathway carbohydrate biosynthesis; gluconeogenesis. It participates in carbohydrate degradation; glycolysis; D-glyceraldehyde 3-phosphate from glycerone phosphate: step 1/1. Its function is as follows. Involved in the gluconeogenesis. Catalyzes stereospecifically the conversion of dihydroxyacetone phosphate (DHAP) to D-glyceraldehyde-3-phosphate (G3P). This is Triosephosphate isomerase from Cutibacterium acnes (strain DSM 16379 / KPA171202) (Propionibacterium acnes).